Consider the following 183-residue polypeptide: Ribulose bisphosphate carboxylase small subunit, chloroplastic 4 (183 aa).

The transit peptide at 1–57 (MASSLMSNAATTMAAATTTAQANMVAPFNGLKSISAFPVTRKNNDITSVASNGGRVQ) directs the protein to the chloroplast.

The protein belongs to the RuBisCO small chain family. As to quaternary structure, heterohexadecamer of 8 large and 8 small subunits.

The protein localises to the plastid. It localises to the chloroplast. Functionally, ruBisCO catalyzes two reactions: the carboxylation of D-ribulose 1,5-bisphosphate, the primary event in carbon dioxide fixation, as well as the oxidative fragmentation of the pentose substrate. Both reactions occur simultaneously and in competition at the same active site. Although the small subunit is not catalytic it is essential for maximal activity. The sequence is that of Ribulose bisphosphate carboxylase small subunit, chloroplastic 4 from Mesembryanthemum crystallinum (Common ice plant).